The chain runs to 784 residues: Spindle pole body component alp4 (784 aa).

Belongs to the TUBGCP family. In terms of assembly, part of the gamma-tubulin complex. Interacts with mcp6. Interacts with mto1. Interacts with mto2.

It localises to the cytoplasm. The protein resides in the cytoskeleton. The protein localises to the microtubule organizing center. Its subcellular location is the spindle pole body. Component of the gamma tubule complex that is required for the regulation of both interphase microtubules and mitotic bipolar spindles. This Schizosaccharomyces pombe (strain 972 / ATCC 24843) (Fission yeast) protein is Spindle pole body component alp4 (alp4).